The chain runs to 582 residues: Phosphoribosylaminoimidazole carboxylase (582 aa).

The ATP-grasp domain maps to 114-305; the sequence is KKYLAERGVA…QFENHLRAIL (192 aa). 143-200 is an ATP binding site; the sequence is AGRLGLPLMLKAKTLAYDGRGNSPLKSASSGDIQASLKFLGDRPLYAEGWAPFVKEVA.

In the C-terminal section; belongs to the AIR carboxylase family. Class I subfamily.

It carries out the reaction 5-amino-1-(5-phospho-D-ribosyl)imidazole-4-carboxylate + H(+) = 5-amino-1-(5-phospho-beta-D-ribosyl)imidazole + CO2. The protein operates within purine metabolism; IMP biosynthesis via de novo pathway; 5-amino-1-(5-phospho-D-ribosyl)imidazole-4-carboxylate from 5-amino-1-(5-phospho-D-ribosyl)imidazole (carboxylase route): step 1/1. This is Phosphoribosylaminoimidazole carboxylase (ADE2) from Cryptococcus neoformans var. neoformans serotype D (strain JEC21 / ATCC MYA-565) (Filobasidiella neoformans).